A 146-amino-acid chain; its full sequence is Large ribosomal subunit protein bL17 (146 aa).

The interval 118-146 is disordered; it reads RDPAAKGQDSGPKPEVASDEDEAGEAAAA. Acidic residues predominate over residues 134-146; it reads ASDEDEAGEAAAA.

It belongs to the bacterial ribosomal protein bL17 family. As to quaternary structure, part of the 50S ribosomal subunit. Contacts protein L32.

This Acidiphilium cryptum (strain JF-5) protein is Large ribosomal subunit protein bL17.